The chain runs to 668 residues: DNA ligase (668 aa).

NAD(+) is bound by residues 31–35, 80–81, and E111; these read DYDFD and SL. Catalysis depends on K113, which acts as the N6-AMP-lysine intermediate. NAD(+)-binding residues include R134, E170, K285, and K309. Zn(2+) is bound by residues C403, C406, C421, and C427. Residues 587 to 668 enclose the BRCT domain; that stretch reads NATEKFIGKT…EFITKLNESE (82 aa).

The protein belongs to the NAD-dependent DNA ligase family. LigA subfamily. The cofactor is Mg(2+). Mn(2+) is required as a cofactor.

It catalyses the reaction NAD(+) + (deoxyribonucleotide)n-3'-hydroxyl + 5'-phospho-(deoxyribonucleotide)m = (deoxyribonucleotide)n+m + AMP + beta-nicotinamide D-nucleotide.. In terms of biological role, DNA ligase that catalyzes the formation of phosphodiester linkages between 5'-phosphoryl and 3'-hydroxyl groups in double-stranded DNA using NAD as a coenzyme and as the energy source for the reaction. It is essential for DNA replication and repair of damaged DNA. This chain is DNA ligase, found in Flavobacterium johnsoniae (strain ATCC 17061 / DSM 2064 / JCM 8514 / BCRC 14874 / CCUG 350202 / NBRC 14942 / NCIMB 11054 / UW101) (Cytophaga johnsonae).